The chain runs to 228 residues: Urease accessory protein UreF 1 (228 aa).

The protein belongs to the UreF family. In terms of assembly, ureD, UreF and UreG form a complex that acts as a GTP-hydrolysis-dependent molecular chaperone, activating the urease apoprotein by helping to assemble the nickel containing metallocenter of UreC. The UreE protein probably delivers the nickel.

The protein resides in the cytoplasm. Functionally, required for maturation of urease via the functional incorporation of the urease nickel metallocenter. In Brucella canis (strain ATCC 23365 / NCTC 10854 / RM-666), this protein is Urease accessory protein UreF 1.